A 151-amino-acid chain; its full sequence is MLP-like protein 168 (151 aa).

This sequence belongs to the MLP family.

This is MLP-like protein 168 (MLP168) from Arabidopsis thaliana (Mouse-ear cress).